Consider the following 425-residue polypeptide: tRNA(Ile)-lysidine synthase (425 aa).

27 to 32 (SGGLDS) is a binding site for ATP.

Belongs to the tRNA(Ile)-lysidine synthase family.

Its subcellular location is the cytoplasm. It carries out the reaction cytidine(34) in tRNA(Ile2) + L-lysine + ATP = lysidine(34) in tRNA(Ile2) + AMP + diphosphate + H(+). Functionally, ligates lysine onto the cytidine present at position 34 of the AUA codon-specific tRNA(Ile) that contains the anticodon CAU, in an ATP-dependent manner. Cytidine is converted to lysidine, thus changing the amino acid specificity of the tRNA from methionine to isoleucine. The chain is tRNA(Ile)-lysidine synthase from Streptococcus pneumoniae (strain Taiwan19F-14).